The chain runs to 426 residues: Chaperone SurA (426 aa).

The first 13 residues, 1–13 (MLGALFLSTAASA), serve as a signal peptide directing secretion. PpiC domains lie at 164-265 (SEEL…KLLD) and 274-373 (RDEV…EVLG).

The protein resides in the periplasm. The catalysed reaction is [protein]-peptidylproline (omega=180) = [protein]-peptidylproline (omega=0). In terms of biological role, chaperone involved in the correct folding and assembly of outer membrane proteins. Recognizes specific patterns of aromatic residues and the orientation of their side chains, which are found more frequently in integral outer membrane proteins. May act in both early periplasmic and late outer membrane-associated steps of protein maturation. This chain is Chaperone SurA, found in Pseudomonas fluorescens (strain ATCC BAA-477 / NRRL B-23932 / Pf-5).